The following is a 1080-amino-acid chain: Carbamoyl phosphate synthase large chain (1080 aa).

The tract at residues 1 to 403 (MPKRTDLETI…SLQKALRGLE (403 aa)) is carboxyphosphate synthetic domain. ATP is bound by residues Arg-129, Arg-169, Gly-175, Gly-176, Glu-208, Val-210, Glu-215, Gly-241, Val-242, His-243, Gln-285, and Glu-299. An ATP-grasp 1 domain is found at 133 to 328 (RVAMGEIGLD…IAKVAAKLAV (196 aa)). Gln-285, Glu-299, and Asn-301 together coordinate Mg(2+). The Mn(2+) site is built by Gln-285, Glu-299, and Asn-301. The tract at residues 404–554 (TGKIGLDPTG…YSTYEDECEA (151 aa)) is oligomerization domain. The carbamoyl phosphate synthetic domain stretch occupies residues 555 to 942 (LPTDRDKIMI…AFARAQEAGG (388 aa)). Positions 679 to 876 (QQLVDKLGLK…LAKIAARCMA (198 aa)) constitute an ATP-grasp 2 domain. Arg-715, Arg-754, Leu-756, Glu-761, Gly-787, Val-788, His-789, Ser-790, Gln-830, and Glu-847 together coordinate ATP. Gln-830, Glu-847, and Asn-849 together coordinate Mg(2+). Gln-830, Glu-847, and Asn-849 together coordinate Mn(2+). Residues 943-1080 (IKAPPLGKAF…LQELHKELEA (138 aa)) enclose the MGS-like domain. Residues 943–1080 (IKAPPLGKAF…LQELHKELEA (138 aa)) form an allosteric domain region.

The protein belongs to the CarB family. In terms of assembly, composed of two chains; the small (or glutamine) chain promotes the hydrolysis of glutamine to ammonia, which is used by the large (or ammonia) chain to synthesize carbamoyl phosphate. Tetramer of heterodimers (alpha,beta)4. Mg(2+) serves as cofactor. The cofactor is Mn(2+).

It catalyses the reaction hydrogencarbonate + L-glutamine + 2 ATP + H2O = carbamoyl phosphate + L-glutamate + 2 ADP + phosphate + 2 H(+). The enzyme catalyses hydrogencarbonate + NH4(+) + 2 ATP = carbamoyl phosphate + 2 ADP + phosphate + 2 H(+). Its pathway is amino-acid biosynthesis; L-arginine biosynthesis; carbamoyl phosphate from bicarbonate: step 1/1. It functions in the pathway pyrimidine metabolism; UMP biosynthesis via de novo pathway; (S)-dihydroorotate from bicarbonate: step 1/3. Its function is as follows. Large subunit of the glutamine-dependent carbamoyl phosphate synthetase (CPSase). CPSase catalyzes the formation of carbamoyl phosphate from the ammonia moiety of glutamine, carbonate, and phosphate donated by ATP, constituting the first step of 2 biosynthetic pathways, one leading to arginine and/or urea and the other to pyrimidine nucleotides. The large subunit (synthetase) binds the substrates ammonia (free or transferred from glutamine from the small subunit), hydrogencarbonate and ATP and carries out an ATP-coupled ligase reaction, activating hydrogencarbonate by forming carboxy phosphate which reacts with ammonia to form carbamoyl phosphate. The protein is Carbamoyl phosphate synthase large chain of Xanthomonas axonopodis pv. citri (strain 306).